An 879-amino-acid polypeptide reads, in one-letter code: DNA mismatch repair protein MutS (879 aa).

Position 629–636 (629–636) interacts with ATP; that stretch reads GPNMGGKS.

This sequence belongs to the DNA mismatch repair MutS family.

Functionally, this protein is involved in the repair of mismatches in DNA. It is possible that it carries out the mismatch recognition step. This protein has a weak ATPase activity. The chain is DNA mismatch repair protein MutS from Erythrobacter litoralis (strain HTCC2594).